The following is a 101-amino-acid chain: Ascorbate-specific PTS system EIIB component (101 aa).

The region spanning 3–96 (VRILAVCGNG…KLLKVIKEHF (94 aa)) is the PTS EIIB type-2 domain. Cys-9 acts as the Phosphocysteine intermediate in catalysis. Cys-9 bears the Phosphocysteine mark.

It localises to the cytoplasm. The catalysed reaction is N(pros)-phospho-L-histidyl-[protein] + L-ascorbate(out) = L-ascorbate 6-phosphate(in) + L-histidyl-[protein]. Functionally, the phosphoenolpyruvate-dependent sugar phosphotransferase system (sugar PTS), a major carbohydrate active transport system, catalyzes the phosphorylation of incoming sugar substrates concomitantly with their translocation across the cell membrane. The enzyme II UlaABC PTS system is involved in ascorbate transport. This chain is Ascorbate-specific PTS system EIIB component (ulaB), found in Shigella dysenteriae serotype 1 (strain Sd197).